The primary structure comprises 444 residues: Homogentisate 1,2-dioxygenase (444 aa).

The active-site Proton acceptor is histidine 298. Histidine 341 and glutamate 347 together coordinate Fe cation. Homogentisate-binding residues include tyrosine 356 and histidine 377. Histidine 377 contributes to the Fe cation binding site.

Belongs to the homogentisate dioxygenase family. Hexamer; dimer of trimers. Fe cation serves as cofactor.

It catalyses the reaction homogentisate + O2 = 4-maleylacetoacetate + H(+). It participates in amino-acid degradation; L-phenylalanine degradation; acetoacetate and fumarate from L-phenylalanine: step 4/6. Functionally, involved in the catabolism of homogentisate (2,5-dihydroxyphenylacetate or 2,5-OH-PhAc), a central intermediate in the degradation of phenylalanine and tyrosine. Catalyzes the oxidative ring cleavage of the aromatic ring of homogentisate to yield maleylacetoacetate. The sequence is that of Homogentisate 1,2-dioxygenase from Burkholderia ambifaria (strain ATCC BAA-244 / DSM 16087 / CCUG 44356 / LMG 19182 / AMMD) (Burkholderia cepacia (strain AMMD)).